Here is a 360-residue protein sequence, read N- to C-terminus: Mitogen-activated protein kinase 14 (360 aa).

An N-acetylserine modification is found at serine 2. Serine 2 carries the post-translational modification Phosphoserine. The residue at position 16 (threonine 16) is a Phosphothreonine. The 285-residue stretch at 24 to 308 (YQNLSPVGSG…AAQALAHAYF (285 aa)) folds into the Protein kinase domain. Residues 30–38 (VGSGAYGSV) and lysine 53 contribute to the ATP site. Position 53 is an N6-acetyllysine (lysine 53). The active-site Proton acceptor is aspartate 150. Lysine 152 carries the post-translational modification N6-acetyllysine. Phosphothreonine; by MAP2K3, MAP2K4, MAP2K6 and autocatalysis is present on threonine 180. Residue tyrosine 182 is modified to Phosphotyrosine; by MAP2K3, MAP2K4, MAP2K6 and autocatalysis. Position 263 is a phosphothreonine (threonine 263). Residue tyrosine 323 is modified to Phosphotyrosine; by ZAP70.

This sequence belongs to the protein kinase superfamily. CMGC Ser/Thr protein kinase family. MAP kinase subfamily. Component of a signaling complex containing at least AKAP13, PKN1, MAPK14, ZAK and MAP2K3. Within this complex, AKAP13 interacts directly with PKN1, which in turn recruits MAPK14, MAP2K3 and ZAK. Binds to a kinase interaction motif within the protein tyrosine phosphatase, PTPRR. This interaction retains MAPK14 in the cytoplasm and prevents nuclear accumulation. Interacts with SPAG9 and GADD45A. Interacts with CDC25B, CDC25C, DUSP1, DUSP10, DUSP16, NP60, SUPT20H and TAB1. Interacts with casein kinase II subunits CSNK2A1 and CSNK2B. Interacts with PPM1D. Interacts with CDK5RAP3; recruits PPM1D to MAPK14 and may regulate its dephosphorylation. Interacts with DUSP2; this interaction does not lead to catalytic activation of DUSP2 and dephosphrylation of MAPK14. Mg(2+) serves as cofactor. Post-translationally, dually phosphorylated on Thr-180 and Tyr-182 by the MAP2Ks MAP2K3/MKK3, MAP2K4/MKK4 and MAP2K6/MKK6 in response to inflammatory cytokines, environmental stress or growth factors, which activates the enzyme. Dual phosphorylation can also be mediated by TAB1-mediated autophosphorylation. TCR engagement in T-cells also leads to Tyr-323 phosphorylation by ZAP70. Dephosphorylated and inactivated by DUPS1, DUSP10 and DUSP16. PPM1D also mediates dephosphorylation and inactivation of MAPK14. Acetylated at Lys-53 and Lys-152 by KAT2B and EP300. Acetylation at Lys-53 increases the affinity for ATP and enhances kinase activity. Lys-53 and Lys-152 are deacetylated by HDAC3. In terms of processing, ubiquitinated. Ubiquitination leads to degradation by the proteasome pathway.

It localises to the cytoplasm. Its subcellular location is the nucleus. It carries out the reaction L-seryl-[protein] + ATP = O-phospho-L-seryl-[protein] + ADP + H(+). The catalysed reaction is L-threonyl-[protein] + ATP = O-phospho-L-threonyl-[protein] + ADP + H(+). Its activity is regulated as follows. Activated by cell stresses such as DNA damage, heat shock, osmotic shock, anisomycin and sodium arsenite, as well as pro-inflammatory stimuli such as bacterial lipopolysaccharide (LPS) and interleukin-1. Activation occurs through dual phosphorylation of Thr-180 and Tyr-182 by either of two dual specificity kinases, MAP2K3/MKK3 or MAP2K6/MKK6, and potentially also MAP2K4/MKK4, as well as by TAB1-mediated autophosphorylation. MAPK14 phosphorylated on both Thr-180 and Tyr-182 is 10-20-fold more active than MAPK14 phosphorylated only on Thr-180, whereas MAPK14 phosphorylated on Tyr-182 alone is inactive. whereas Thr-180 is necessary for catalysis, Tyr-182 may be required for auto-activation and substrate recognition. Phosphorylated at Tyr-323 by ZAP70 in an alternative activation pathway in response to TCR signaling in T-cells. This alternative pathway is inhibited by GADD45A. Inhibited by dual specificity phosphatases, such as DUSP1, DUSP10, and DUSP16. Specifically inhibited by the binding of pyridinyl-imidazole compounds, which are cytokine-suppressive anti-inflammatory drugs (CSAID). SB203580 is an inhibitor of MAPK14. Serine/threonine kinase which acts as an essential component of the MAP kinase signal transduction pathway. MAPK14 is one of the four p38 MAPKs which play an important role in the cascades of cellular responses evoked by extracellular stimuli such as pro-inflammatory cytokines or physical stress leading to direct activation of transcription factors. Accordingly, p38 MAPKs phosphorylate a broad range of proteins and it has been estimated that they may have approximately 200 to 300 substrates each. Some of the targets are downstream kinases which are activated through phosphorylation and further phosphorylate additional targets. RPS6KA5/MSK1 and RPS6KA4/MSK2 can directly phosphorylate and activate transcription factors such as CREB1, ATF1, the NF-kappa-B isoform RELA/NFKB3, STAT1 and STAT3, but can also phosphorylate histone H3 and the nucleosomal protein HMGN1. RPS6KA5/MSK1 and RPS6KA4/MSK2 play important roles in the rapid induction of immediate-early genes in response to stress or mitogenic stimuli, either by inducing chromatin remodeling or by recruiting the transcription machinery. On the other hand, two other kinase targets, MAPKAPK2/MK2 and MAPKAPK3/MK3, participate in the control of gene expression mostly at the post-transcriptional level, by phosphorylating ZFP36 (tristetraprolin) and ELAVL1, and by regulating EEF2K, which is important for the elongation of mRNA during translation. MKNK1/MNK1 and MKNK2/MNK2, two other kinases activated by p38 MAPKs, regulate protein synthesis by phosphorylating the initiation factor EIF4E2. MAPK14 also interacts with casein kinase II, leading to its activation through autophosphorylation and further phosphorylation of TP53/p53. In the cytoplasm, the p38 MAPK pathway is an important regulator of protein turnover. For example, CFLAR is an inhibitor of TNF-induced apoptosis whose proteasome-mediated degradation is regulated by p38 MAPK phosphorylation. In a similar way, MAPK14 phosphorylates the ubiquitin ligase SIAH2, regulating its activity towards EGLN3. MAPK14 may also inhibit the lysosomal degradation pathway of autophagy by interfering with the intracellular trafficking of the transmembrane protein ATG9. Another function of MAPK14 is to regulate the endocytosis of membrane receptors by different mechanisms that impinge on the small GTPase RAB5A. In addition, clathrin-mediated EGFR internalization induced by inflammatory cytokines and UV irradiation depends on MAPK14-mediated phosphorylation of EGFR itself as well as of RAB5A effectors. Ectodomain shedding of transmembrane proteins is regulated by p38 MAPKs as well. In response to inflammatory stimuli, p38 MAPKs phosphorylate the membrane-associated metalloprotease ADAM17. Such phosphorylation is required for ADAM17-mediated ectodomain shedding of TGF-alpha family ligands, which results in the activation of EGFR signaling and cell proliferation. Another p38 MAPK substrate is FGFR1. FGFR1 can be translocated from the extracellular space into the cytosol and nucleus of target cells, and regulates processes such as rRNA synthesis and cell growth. FGFR1 translocation requires p38 MAPK activation. In the nucleus, many transcription factors are phosphorylated and activated by p38 MAPKs in response to different stimuli. Classical examples include ATF1, ATF2, ATF6, ELK1, PTPRH, DDIT3, TP53/p53 and MEF2C and MEF2A. The p38 MAPKs are emerging as important modulators of gene expression by regulating chromatin modifiers and remodelers. The promoters of several genes involved in the inflammatory response, such as IL6, IL8 and IL12B, display a p38 MAPK-dependent enrichment of histone H3 phosphorylation on 'Ser-10' (H3S10ph) in LPS-stimulated myeloid cells. This phosphorylation enhances the accessibility of the cryptic NF-kappa-B-binding sites marking promoters for increased NF-kappa-B recruitment. Phosphorylates CDC25B and CDC25C which is required for binding to 14-3-3 proteins and leads to initiation of a G2 delay after ultraviolet radiation. Phosphorylates TIAR following DNA damage, releasing TIAR from GADD45A mRNA and preventing mRNA degradation. The p38 MAPKs may also have kinase-independent roles, which are thought to be due to the binding to targets in the absence of phosphorylation. Protein O-Glc-N-acylation catalyzed by the OGT is regulated by MAPK14, and, although OGT does not seem to be phosphorylated by MAPK14, their interaction increases upon MAPK14 activation induced by glucose deprivation. This interaction may regulate OGT activity by recruiting it to specific targets such as neurofilament H, stimulating its O-Glc-N-acylation. Required in mid-fetal development for the growth of embryo-derived blood vessels in the labyrinth layer of the placenta. Also plays an essential role in developmental and stress-induced erythropoiesis, through regulation of EPO gene expression. Phosphorylates S100A9 at 'Thr-113'. In Pan troglodytes (Chimpanzee), this protein is Mitogen-activated protein kinase 14.